The chain runs to 362 residues: Protein-glutamate methylesterase/protein-glutamine glutaminase 5 (362 aa).

In terms of domain architecture, Response regulatory spans 13-130 (RVLVVDDSAL…RRFLEESRVR (118 aa)). At D64 the chain carries 4-aspartylphosphate. A CheB-type methylesterase domain is found at 172-362 (LQTTERVVVV…IPPELLRLCR (191 aa)). Active-site residues include S184, H210, and D306.

Belongs to the CheB family. In terms of processing, phosphorylated by CheA. Phosphorylation of the N-terminal regulatory domain activates the methylesterase activity.

Its subcellular location is the cytoplasm. It carries out the reaction [protein]-L-glutamate 5-O-methyl ester + H2O = L-glutamyl-[protein] + methanol + H(+). The catalysed reaction is L-glutaminyl-[protein] + H2O = L-glutamyl-[protein] + NH4(+). Involved in chemotaxis. Part of a chemotaxis signal transduction system that modulates chemotaxis in response to various stimuli. Catalyzes the demethylation of specific methylglutamate residues introduced into the chemoreceptors (methyl-accepting chemotaxis proteins or MCP) by CheR. Also mediates the irreversible deamidation of specific glutamine residues to glutamic acid. The polypeptide is Protein-glutamate methylesterase/protein-glutamine glutaminase 5 (Anaeromyxobacter dehalogenans (strain 2CP-C)).